We begin with the raw amino-acid sequence, 265 residues long: Cell adhesion molecule CEACAM7 (265 aa).

Positions 1–35 (MGSPSACPYRVCIPWQGLLLTASLLTFWNLPNSAQ) are cleaved as a signal peptide. Positions 36–142 (TNIDVVPFNV…EEVTRQFYVF (107 aa)) constitute an Ig-like V-type domain. N-linked (GlcNAc...) asparagine glycans are attached at residues asparagine 57, asparagine 85, asparagine 105, asparagine 112, asparagine 174, asparagine 183, and asparagine 198. The Ig-like C2-type domain maps to 146–233 (PKPSITSNNF…ASRSDPVTLN (88 aa)). Cysteine 168 and cysteine 216 are joined by a disulfide. Serine 242 is lipidated: GPI-anchor amidated serine. Positions 243–265 (SPDLSAGTAVSIMIGVLAGMALI) are cleaved as a propeptide — removed in mature form.

Belongs to the immunoglobulin superfamily. CEA family. In terms of assembly, homodimer. Expressed in columnar epithelial cells of the colon (at protein level). Strongly down-regulated in colonic adenocarcinomas.

It is found in the cell membrane. The protein localises to the apical cell membrane. The sequence is that of Cell adhesion molecule CEACAM7 from Homo sapiens (Human).